The chain runs to 478 residues: Cytochrome c-552 (478 aa).

The N-terminal stretch at 1–26 (MARKTLRARRFFSLIFPFFFITSVYA) is a signal peptide. His-94 is a heme c binding site. Heme-binding residues include Cys-122, Cys-125, and Lys-126. Heme c contacts are provided by Cys-160, Cys-163, His-164, Cys-209, Cys-212, and His-213. The Ca(2+) site is built by Glu-215, Tyr-216, Lys-261, and Gln-263. Residue Tyr-216 participates in substrate binding. Residue His-264 participates in substrate binding. Positions 275, 282, 285, 286, 301, 314, 317, 318, and 393 each coordinate heme c.

The protein belongs to the cytochrome c-552 family. It depends on Ca(2+) as a cofactor. The cofactor is heme c.

It localises to the periplasm. It catalyses the reaction 6 Fe(III)-[cytochrome c] + NH4(+) + 2 H2O = 6 Fe(II)-[cytochrome c] + nitrite + 8 H(+). It functions in the pathway nitrogen metabolism; nitrate reduction (assimilation). Catalyzes the reduction of nitrite to ammonia, consuming six electrons in the process. The chain is Cytochrome c-552 from Salmonella dublin (strain CT_02021853).